Consider the following 210-residue polypeptide: Probable septum site-determining protein MinC (210 aa).

This sequence belongs to the MinC family. In terms of assembly, interacts with MinD and FtsZ.

Its function is as follows. Cell division inhibitor that blocks the formation of polar Z ring septums. Rapidly oscillates between the poles of the cell to destabilize FtsZ filaments that have formed before they mature into polar Z rings. Prevents FtsZ polymerization. The polypeptide is Probable septum site-determining protein MinC (Thermotoga petrophila (strain ATCC BAA-488 / DSM 13995 / JCM 10881 / RKU-1)).